A 189-amino-acid chain; its full sequence is Chitin synthase 1 (189 aa).

This sequence belongs to the chitin synthase family. Class I subfamily.

Its subcellular location is the cell membrane. It carries out the reaction [(1-&gt;4)-N-acetyl-beta-D-glucosaminyl](n) + UDP-N-acetyl-alpha-D-glucosamine = [(1-&gt;4)-N-acetyl-beta-D-glucosaminyl](n+1) + UDP + H(+). Functionally, polymerizes chitin, a structural polymer of the cell wall and septum, by transferring the sugar moiety of UDP-GlcNAc to the non-reducing end of the growing chitin polymer. This chain is Chitin synthase 1 (CHS1), found in Ajellomyces capsulatus (Darling's disease fungus).